Consider the following 235-residue polypeptide: UPF0502 protein Bmul_3231/BMULJ_05293 (235 aa).

This sequence belongs to the UPF0502 family.

In Burkholderia multivorans (strain ATCC 17616 / 249), this protein is UPF0502 protein Bmul_3231/BMULJ_05293.